Here is a 437-residue protein sequence, read N- to C-terminus: Enolase (437 aa).

Gln-166 provides a ligand contact to (2R)-2-phosphoglycerate. The active-site Proton donor is Glu-208. Mg(2+)-binding residues include Asp-245, Glu-295, and Asp-322. Positions 347, 376, 377, and 398 each coordinate (2R)-2-phosphoglycerate. Residue Lys-347 is the Proton acceptor of the active site.

It belongs to the enolase family. Mg(2+) serves as cofactor.

The protein localises to the cytoplasm. It localises to the secreted. The protein resides in the cell surface. It catalyses the reaction (2R)-2-phosphoglycerate = phosphoenolpyruvate + H2O. Its pathway is carbohydrate degradation; glycolysis; pyruvate from D-glyceraldehyde 3-phosphate: step 4/5. Catalyzes the reversible conversion of 2-phosphoglycerate (2-PG) into phosphoenolpyruvate (PEP). It is essential for the degradation of carbohydrates via glycolysis. The polypeptide is Enolase (Lachnoclostridium phytofermentans (strain ATCC 700394 / DSM 18823 / ISDg) (Clostridium phytofermentans)).